The sequence spans 184 residues: Ribosome-recycling factor (184 aa).

It belongs to the RRF family.

It is found in the cytoplasm. Its function is as follows. Responsible for the release of ribosomes from messenger RNA at the termination of protein biosynthesis. May increase the efficiency of translation by recycling ribosomes from one round of translation to another. In Psychrobacter sp. (strain PRwf-1), this protein is Ribosome-recycling factor.